Consider the following 331-residue polypeptide: UDP-xylose and UDP-N-acetylglucosamine transporter (331 aa).

The next 10 membrane-spanning stretches (helical) occupy residues 5 to 25, 30 to 50, 59 to 79, 92 to 112, 122 to 142, 153 to 173, 201 to 221, 238 to 260, 267 to 289, and 301 to 321; these read FAVT…ELLV, GCGN…GFIF, PQIP…VSVI, LHMI…IIIL, LSIV…AKQV, GVYA…ALLM, CLPL…AVLF, VMWF…VFIL, LTVT…LYFQ, and AVVF…PAAF.

Belongs to the nucleotide-sugar transporter family. SLC35B subfamily.

It localises to the golgi apparatus membrane. Sugar transporter that specifically mediates the transport of UDP-xylose (UDP-Xyl) and UDP-N-acetylglucosamine (UDP-GlcNAc) from cytosol into Golgi. In Danio rerio (Zebrafish), this protein is UDP-xylose and UDP-N-acetylglucosamine transporter (slc35b4).